The chain runs to 105 residues: Guanidinium exporter (105 aa).

A helical membrane pass occupies residues 1–21; the sequence is MSWIILLIAGLLEVVWAVGLK. The Cytoplasmic portion of the chain corresponds to 22–28; sequence YTHGFSR. The chain crosses the membrane as a helical span at residues 29 to 49; the sequence is LTPSIITITAMVISMALLSWA. Residues 50–57 are Periplasmic-facing; that stretch reads MKTLPVGT. A helical membrane pass occupies residues 58 to 78; sequence AYAIWTGIGAVGAAITGILLL. The Cytoplasmic portion of the chain corresponds to 79–81; the sequence is GES. A helical membrane pass occupies residues 82–102; the sequence is ASPARLLSLGLIVAGIIGLKL. Residues 103-105 lie on the Periplasmic side of the membrane; that stretch reads SAH.

Belongs to the drug/metabolite transporter (DMT) superfamily. Small multidrug resistance (SMR) (TC 2.A.7.1) family. Gdx/SugE subfamily.

The protein resides in the cell inner membrane. Guanidinium ion exporter. Couples guanidinium export to the proton motive force, exchanging one guanidinium ion for two protons. The sequence is that of Guanidinium exporter from Salmonella typhi.